A 72-amino-acid chain; its full sequence is MAAKKDLLTQLRGKSDDDLDAYVHENKKALFALRAENLLQNKVVKVHMFSTHKKNIARALTVKQERKGKVHG.

This sequence belongs to the universal ribosomal protein uL29 family.

This chain is Large ribosomal subunit protein uL29 (rpmC), found in Chlamydia pneumoniae (Chlamydophila pneumoniae).